A 60-amino-acid polypeptide reads, in one-letter code: Large ribosomal subunit protein uL30 (60 aa).

Belongs to the universal ribosomal protein uL30 family. In terms of assembly, part of the 50S ribosomal subunit.

In Paracidovorax citrulli (strain AAC00-1) (Acidovorax citrulli), this protein is Large ribosomal subunit protein uL30.